Here is a 198-residue protein sequence, read N- to C-terminus: ATP-dependent Clp protease proteolytic subunit (198 aa).

S101 serves as the catalytic Nucleophile. The active site involves H126.

Belongs to the peptidase S14 family. Component of the chloroplastic Clp protease core complex.

The protein resides in the plastid. The protein localises to the chloroplast stroma. It carries out the reaction Hydrolysis of proteins to small peptides in the presence of ATP and magnesium. alpha-casein is the usual test substrate. In the absence of ATP, only oligopeptides shorter than five residues are hydrolyzed (such as succinyl-Leu-Tyr-|-NHMec, and Leu-Tyr-Leu-|-Tyr-Trp, in which cleavage of the -Tyr-|-Leu- and -Tyr-|-Trp bonds also occurs).. Cleaves peptides in various proteins in a process that requires ATP hydrolysis. Has a chymotrypsin-like activity. Plays a major role in the degradation of misfolded proteins. The protein is ATP-dependent Clp protease proteolytic subunit of Psilotum nudum (Whisk fern).